Here is a 310-residue protein sequence, read N- to C-terminus: Nodulation protein D 1 (310 aa).

The 58-residue stretch at L6–T63 folds into the HTH lysR-type domain. A DNA-binding region (H-T-H motif) is located at residues L23–A42.

It belongs to the LysR transcriptional regulatory family.

Functionally, nodD regulates the expression of the nodABCFE genes which encode other nodulation proteins. NodD is also a negative regulator of its own expression. Binds flavonoids as inducers. The polypeptide is Nodulation protein D 1 (nodD1) (Neorhizobium galegae (Rhizobium galegae)).